The primary structure comprises 80 residues: Exodeoxyribonuclease 7 small subunit (80 aa).

The protein belongs to the XseB family. Heterooligomer composed of large and small subunits.

Its subcellular location is the cytoplasm. The catalysed reaction is Exonucleolytic cleavage in either 5'- to 3'- or 3'- to 5'-direction to yield nucleoside 5'-phosphates.. Functionally, bidirectionally degrades single-stranded DNA into large acid-insoluble oligonucleotides, which are then degraded further into small acid-soluble oligonucleotides. The chain is Exodeoxyribonuclease 7 small subunit from Enterobacter sp. (strain 638).